The sequence spans 92 residues: Putative membrane protein insertion efficiency factor (92 aa).

This sequence belongs to the UPF0161 family.

The protein resides in the cell membrane. Functionally, could be involved in insertion of integral membrane proteins into the membrane. This Tropheryma whipplei (strain TW08/27) (Whipple's bacillus) protein is Putative membrane protein insertion efficiency factor.